We begin with the raw amino-acid sequence, 503 residues long: Probable cytosol aminopeptidase (503 aa).

2 residues coordinate Mn(2+): Lys-270 and Asp-275. Residue Lys-282 is part of the active site. Mn(2+)-binding residues include Asp-293, Asp-352, and Glu-354. Arg-356 is an active-site residue.

It belongs to the peptidase M17 family. Mn(2+) serves as cofactor.

It is found in the cytoplasm. It carries out the reaction Release of an N-terminal amino acid, Xaa-|-Yaa-, in which Xaa is preferably Leu, but may be other amino acids including Pro although not Arg or Lys, and Yaa may be Pro. Amino acid amides and methyl esters are also readily hydrolyzed, but rates on arylamides are exceedingly low.. It catalyses the reaction Release of an N-terminal amino acid, preferentially leucine, but not glutamic or aspartic acids.. Functionally, presumably involved in the processing and regular turnover of intracellular proteins. Catalyzes the removal of unsubstituted N-terminal amino acids from various peptides. The sequence is that of Probable cytosol aminopeptidase from Sodalis glossinidius (strain morsitans).